A 154-amino-acid chain; its full sequence is Myoglobin (154 aa).

Positions 2–148 (VLTDAEWHLV…FRKDIAAKYK (147 aa)) constitute a Globin domain. Residue His65 participates in nitrite binding. Position 65 (His65) interacts with O2. Residue Thr68 is modified to Phosphothreonine. His94 provides a ligand contact to heme b.

The protein belongs to the globin family. In terms of assembly, monomeric.

The protein resides in the cytoplasm. It localises to the sarcoplasm. The catalysed reaction is Fe(III)-heme b-[protein] + nitric oxide + H2O = Fe(II)-heme b-[protein] + nitrite + 2 H(+). It carries out the reaction H2O2 + AH2 = A + 2 H2O. Monomeric heme protein which primary function is to store oxygen and facilitate its diffusion within muscle tissues. Reversibly binds oxygen through a pentacoordinated heme iron and enables its timely and efficient release as needed during periods of heightened demand. Depending on the oxidative conditions of tissues and cells, and in addition to its ability to bind oxygen, it also has a nitrite reductase activity whereby it regulates the production of bioactive nitric oxide. Under stress conditions, like hypoxia and anoxia, it also protects cells against reactive oxygen species thanks to its pseudoperoxidase activity. This is Myoglobin (MB) from Balaenoptera physalus (Fin whale).